The primary structure comprises 368 residues: Protein-glutamate methylesterase/protein-glutamine glutaminase (368 aa).

The Response regulatory domain occupies lysine 9 to glutamate 126. Aspartate 60 is modified (4-aspartylphosphate). In terms of domain architecture, CheB-type methylesterase spans serine 161 to isoleucine 354. Residues serine 173, histidine 200, and aspartate 296 contribute to the active site.

It belongs to the CheB family. Phosphorylated by CheA. Phosphorylation of the N-terminal regulatory domain activates the methylesterase activity.

It localises to the cytoplasm. The catalysed reaction is [protein]-L-glutamate 5-O-methyl ester + H2O = L-glutamyl-[protein] + methanol + H(+). It catalyses the reaction L-glutaminyl-[protein] + H2O = L-glutamyl-[protein] + NH4(+). Functionally, involved in chemotaxis. Part of a chemotaxis signal transduction system that modulates chemotaxis in response to various stimuli. Catalyzes the demethylation of specific methylglutamate residues introduced into the chemoreceptors (methyl-accepting chemotaxis proteins or MCP) by CheR. Also mediates the irreversible deamidation of specific glutamine residues to glutamic acid. This chain is Protein-glutamate methylesterase/protein-glutamine glutaminase, found in Pyrococcus horikoshii (strain ATCC 700860 / DSM 12428 / JCM 9974 / NBRC 100139 / OT-3).